The primary structure comprises 433 residues: Dihydroorotase (433 aa).

Zn(2+)-binding residues include His-63 and His-65. Residues 65–67 (HLR) and Asn-97 contribute to the substrate site. Residues Asp-155, His-182, and His-235 each coordinate Zn(2+). Position 283 (Asn-283) interacts with substrate. Asp-310 serves as a coordination point for Zn(2+). Asp-310 is an active-site residue. His-314 is a substrate binding site.

It belongs to the metallo-dependent hydrolases superfamily. DHOase family. Class I DHOase subfamily. Zn(2+) is required as a cofactor.

It carries out the reaction (S)-dihydroorotate + H2O = N-carbamoyl-L-aspartate + H(+). Its pathway is pyrimidine metabolism; UMP biosynthesis via de novo pathway; (S)-dihydroorotate from bicarbonate: step 3/3. Functionally, catalyzes the reversible cyclization of carbamoyl aspartate to dihydroorotate. The protein is Dihydroorotase of Anaeromyxobacter dehalogenans (strain 2CP-C).